The sequence spans 166 residues: uncharacterized protein (166 aa).

This is an uncharacterized protein from Saccharomyces cerevisiae (strain ATCC 204508 / S288c) (Baker's yeast).